A 941-amino-acid chain; its full sequence is Lysine-specific demethylase 7A (941 aa).

The PHD-type zinc-finger motif lies at 37-88 (PVYCVCRQPYDVNRFMIECDICKDWFHGSCVGVEEHHAVDIDLYHCPNCAVL). The linker stretch occupies residues 97 to 114 (RRNWHRHDYTEIDDGSKP). Residues 230–386 (FSDTKMSELV…MQLRCYEMEK (157 aa)) enclose the JmjC domain. Substrate is bound at residue Thr279. Positions 282 and 284 each coordinate Fe cation. Lys299 contributes to the substrate binding site. Fe cation is bound at residue His354. 3 disordered regions span residues 597–633 (QSLY…EHEE), 677–700 (TTEE…KEES), and 819–921 (QDLS…MATA). Phosphoserine is present on Ser604. 2 stretches are compositionally biased toward basic and acidic residues: residues 618 to 633 (MKIE…EHEE) and 685 to 700 (GDEK…KEES). The segment covering 834 to 876 (SEISQRVQSRNYVDSSGSSLQNGKYMQNSNLTSGACQISNGSL) has biased composition (polar residues).

The protein belongs to the JHDM1 histone demethylase family. JHDM1D subfamily. The cofactor is Fe(2+).

Its subcellular location is the nucleus. The catalysed reaction is N(6),N(6)-dimethyl-L-lysyl(9)-[histone H3] + 2 2-oxoglutarate + 2 O2 = L-lysyl(9)-[histone H3] + 2 formaldehyde + 2 succinate + 2 CO2. It carries out the reaction N(6),N(6)-dimethyl-L-lysyl(27)-[histone H3] + 2 2-oxoglutarate + 2 O2 = L-lysyl(27)-[histone H3] + 2 formaldehyde + 2 succinate + 2 CO2. The enzyme catalyses N(6),N(6)-dimethyl-L-lysyl(36)-[histone H3] + 2-oxoglutarate + O2 = N(6)-methyl-L-lysyl(36)-[histone H3] + formaldehyde + succinate + CO2. It catalyses the reaction N(6)-methyl-L-lysyl(20)-[histone H4] + 2-oxoglutarate + O2 = L-lysyl(20)-[histone H4] + formaldehyde + succinate + CO2. Histone demethylase required for brain development. Specifically demethylates dimethylated 'Lys-9', 'Lys-27' and 'Lys-36' (H3K9me2, H3K27me2, H3K36me2, respectively) of histone H3 and monomethylated histone H4 'Lys-20' residue (H4K20Me1), thereby playing a central role in histone code. Specifically binds trimethylated 'Lys-4' of histone H3 (H3K4me3), affecting histone demethylase specificity: in presence of H3K4me3, it has no demethylase activity toward H3K9me2, while it has high activity toward H3K27me2. Demethylates H3K9me2 in absence of H3K4me3. Has activity toward H4K20Me1 only when nucleosome is used as a substrate and when not histone octamer is used as substrate. The sequence is that of Lysine-specific demethylase 7A (KDM7A) from Homo sapiens (Human).